Here is a 251-residue protein sequence, read N- to C-terminus: Proteasome subunit alpha type-7 (251 aa).

The protein belongs to the peptidase T1A family. As to quaternary structure, the 26S proteasome consists of a 20S proteasome core and two 19S regulatory subunits. The 20S proteasome core is composed of 28 subunits that are arranged in four stacked rings, resulting in a barrel-shaped structure. The two end rings are each formed by seven alpha subunits, and the two central rings are each formed by seven beta subunits. The catalytic chamber with the active sites is on the inside of the barrel.

It is found in the cytoplasm. The protein resides in the nucleus. Its function is as follows. The proteasome is a multicatalytic proteinase complex which is characterized by its ability to cleave peptides with Arg, Phe, Tyr, Leu, and Glu adjacent to the leaving group at neutral or slightly basic pH. The proteasome has an ATP-dependent proteolytic activity. This is Proteasome subunit alpha type-7 (psma7) from Carassius auratus (Goldfish).